The chain runs to 465 residues: Phosphatidylserine synthase 1 (465 aa).

Topologically, residues 1–35 (MVSAMRSRTLSKDDVNYKMHFRMINEQQVEDITID) are cytoplasmic. The chain crosses the membrane as a helical span at residues 36–56 (FFYKPHTITLLTFTTVSLMYF). Over 57-68 (AFTRENTSQEDN) the chain is Lumenal. A helical membrane pass occupies residues 69-89 (IWKGILSVIFFFLIISVLAFP). Over 90-102 (NGPFTRPHPAIWR) the chain is Cytoplasmic. A helical membrane pass occupies residues 103–123 (MVFGLSVLYFLFLVFLLFLNV). The Lumenal portion of the chain corresponds to 124 to 186 (EQVKAVMYWL…AMKALLIRSY (63 aa)). A helical membrane pass occupies residues 187–207 (GLCWTISITWEMTELFFMHLL). Residues 208–216 (PNFAECWWD) are Cytoplasmic-facing. The helical transmembrane segment at 217 to 237 (QVILDILLCNGGGILLGMVVC) threads the bilayer. At 238-286 (RFLEMRTYHWASFKDIHTTTGKIKRAVLQFTPASWIYVRWFDPKSSFQR) the chain is on the lumenal side. Residues 287 to 307 (VAGVYLFMIIWQLTELNTFFL) traverse the membrane as a helical segment. At 308–319 (KHIFVFQASHPL) the chain is on the cytoplasmic side. A helical transmembrane segment spans residues 320–342 (SWCRILFIGIITAPTVRQYYAYL). Residues 343–355 (TDTQCKRVGTQCW) are Lumenal-facing. The chain crosses the membrane as a helical span at residues 356-376 (VFGAIAFLEATVCIKFGQDLF). At 377-383 (SKTHLLY) the chain is on the cytoplasmic side. The helical transmembrane segment at 384-404 (VFLWLFSVAVITFLCLYGMVW) threads the bilayer. Topologically, residues 405 to 465 (YADYCGQREK…GKVTNGVGKK (61 aa)) are lumenal. The interval 440–465 (PVKQNEGTSRRKNRHKGKVTNGVGKK) is disordered. The segment covering 449 to 465 (RRKNRHKGKVTNGVGKK) has biased composition (basic residues).

The protein belongs to the phosphatidyl serine synthase family.

It is found in the endoplasmic reticulum membrane. It catalyses the reaction a 1,2-diacyl-sn-glycero-3-phosphoethanolamine + L-serine = a 1,2-diacyl-sn-glycero-3-phospho-L-serine + ethanolamine. It carries out the reaction a 1,2-diacyl-sn-glycero-3-phosphocholine + L-serine = a 1,2-diacyl-sn-glycero-3-phospho-L-serine + choline. The protein operates within phospholipid metabolism; phosphatidylserine biosynthesis. In terms of biological role, catalyzes a base-exchange reaction in which the polar head group of phosphatidylethanolamine (PE) or phosphatidylcholine (PC) is replaced by L-serine. Catalyzes mainly the conversion of phosphatidylcholine but also converts, in vitro and to a lesser extent, phosphatidylethanolamine. The protein is Phosphatidylserine synthase 1 (ptdss1) of Xenopus tropicalis (Western clawed frog).